We begin with the raw amino-acid sequence, 356 residues long: 3-isopropylmalate dehydrogenase (356 aa).

Positions 90, 100, 128, and 222 each coordinate substrate. Residues D222, D246, and D250 each contribute to the Mg(2+) site. G280 to N292 provides a ligand contact to NAD(+).

It belongs to the isocitrate and isopropylmalate dehydrogenases family. LeuB type 1 subfamily. As to quaternary structure, homodimer. The cofactor is Mg(2+). Mn(2+) is required as a cofactor.

The protein resides in the cytoplasm. The catalysed reaction is (2R,3S)-3-isopropylmalate + NAD(+) = 4-methyl-2-oxopentanoate + CO2 + NADH. It functions in the pathway amino-acid biosynthesis; L-leucine biosynthesis; L-leucine from 3-methyl-2-oxobutanoate: step 3/4. In terms of biological role, catalyzes the oxidation of 3-carboxy-2-hydroxy-4-methylpentanoate (3-isopropylmalate) to 3-carboxy-4-methyl-2-oxopentanoate. The product decarboxylates to 4-methyl-2 oxopentanoate. This is 3-isopropylmalate dehydrogenase from Albidiferax ferrireducens (strain ATCC BAA-621 / DSM 15236 / T118) (Rhodoferax ferrireducens).